The primary structure comprises 497 residues: MVSLLHKFLENASGKKGQSLASTAYLAALDHLLNAFPSIGERIIDELKSQRSHLKMIASENYSSLSVQLAMGNLLTDKYCEGSPFKRFYSCCENVDAIEWECVETAKELFAADCACVQPHSGADANLLAVMAILTHKVQGPAVSKLGYKTVNELTEEEYTLLKAEMSSCVCLGPSLNSGGHLTHGNVRLNVMSKLMRCFPYDVNPDTECFDYAEISRLAKEYKPKVLIAGYSSYSRRLNFAVLKQIAEDCGSVLWVDMAHFAGLVAGGVFVDEENPIPYADIVTTTTHKTLRGPRGGLVLATREYESTLNKACPLMMGGPLPHVIAAKTVALKEALSVDFKKYAHQVVNNARRLAERFLSHGLRLLTGGTDNHMMVIDLGSLGISGKIAEDILSSVGIAVNRNSLPSDAIGKWDTSGIRLGTPALTTLGMGIDEMEEVADIIVKVLRNIRLSCHVEGSSKKNKGELPEAIAQEARDRVRNLLLRFPLYPEIDLEALV.

Residues leucine 176 and 180–182 (GHL) contribute to the (6S)-5,6,7,8-tetrahydrofolate site. Position 289 is an N6-(pyridoxal phosphate)lysine (lysine 289). Glutamate 306 lines the (6S)-5,6,7,8-tetrahydrofolate pocket.

The protein belongs to the SHMT family. In terms of assembly, homodimer. The cofactor is pyridoxal 5'-phosphate.

It localises to the cytoplasm. It catalyses the reaction (6R)-5,10-methylene-5,6,7,8-tetrahydrofolate + glycine + H2O = (6S)-5,6,7,8-tetrahydrofolate + L-serine. It participates in one-carbon metabolism; tetrahydrofolate interconversion. Its pathway is amino-acid biosynthesis; glycine biosynthesis; glycine from L-serine: step 1/1. Catalyzes the reversible interconversion of serine and glycine with tetrahydrofolate (THF) serving as the one-carbon carrier. This reaction serves as the major source of one-carbon groups required for the biosynthesis of purines, thymidylate, methionine, and other important biomolecules. Also exhibits THF-independent aldolase activity toward beta-hydroxyamino acids, producing glycine and aldehydes, via a retro-aldol mechanism. This Chlamydia pneumoniae (Chlamydophila pneumoniae) protein is Serine hydroxymethyltransferase.